A 433-amino-acid polypeptide reads, in one-letter code: Tyrosine--tRNA ligase (433 aa).

Y34 lines the L-tyrosine pocket. Positions 39 to 48 match the 'HIGH' region motif; the sequence is PTASSLHVGS. The L-tyrosine site is built by Y169 and Q173. Positions 229 to 233 match the 'KMSKS' region motif; the sequence is KMGKT. K232 lines the ATP pocket. The S4 RNA-binding domain maps to 364 to 432; that stretch reads IPAFVLFHTV…RYHTIVVRKG (69 aa).

The protein belongs to the class-I aminoacyl-tRNA synthetase family. TyrS type 1 subfamily. Homodimer.

It localises to the cytoplasm. It catalyses the reaction tRNA(Tyr) + L-tyrosine + ATP = L-tyrosyl-tRNA(Tyr) + AMP + diphosphate + H(+). Catalyzes the attachment of tyrosine to tRNA(Tyr) in a two-step reaction: tyrosine is first activated by ATP to form Tyr-AMP and then transferred to the acceptor end of tRNA(Tyr). The sequence is that of Tyrosine--tRNA ligase from Desulfosudis oleivorans (strain DSM 6200 / JCM 39069 / Hxd3) (Desulfococcus oleovorans).